The chain runs to 325 residues: Tetraacyldisaccharide 4'-kinase (325 aa).

Residue Thr-55 to Thr-62 participates in ATP binding.

This sequence belongs to the LpxK family.

It carries out the reaction a lipid A disaccharide + ATP = a lipid IVA + ADP + H(+). Its pathway is glycolipid biosynthesis; lipid IV(A) biosynthesis; lipid IV(A) from (3R)-3-hydroxytetradecanoyl-[acyl-carrier-protein] and UDP-N-acetyl-alpha-D-glucosamine: step 6/6. In terms of biological role, transfers the gamma-phosphate of ATP to the 4'-position of a tetraacyldisaccharide 1-phosphate intermediate (termed DS-1-P) to form tetraacyldisaccharide 1,4'-bis-phosphate (lipid IVA). This chain is Tetraacyldisaccharide 4'-kinase, found in Salmonella typhi.